The sequence spans 306 residues: N-acetylmuramic acid 6-phosphate etherase (306 aa).

Residues 59–222 (TAQALGRGGR…STGVMVCLGK (164 aa)) enclose the SIS domain. Catalysis depends on E87, which acts as the Proton donor. E118 is an active-site residue.

It belongs to the GCKR-like family. MurNAc-6-P etherase subfamily. Homodimer.

The enzyme catalyses N-acetyl-D-muramate 6-phosphate + H2O = N-acetyl-D-glucosamine 6-phosphate + (R)-lactate. The protein operates within amino-sugar metabolism; N-acetylmuramate degradation. Its function is as follows. Specifically catalyzes the cleavage of the D-lactyl ether substituent of MurNAc 6-phosphate, producing GlcNAc 6-phosphate and D-lactate. The protein is N-acetylmuramic acid 6-phosphate etherase of Rippkaea orientalis (strain PCC 8801 / RF-1) (Cyanothece sp. (strain PCC 8801)).